The sequence spans 130 residues: Small ribosomal subunit protein uS11 (130 aa).

It belongs to the universal ribosomal protein uS11 family. As to quaternary structure, part of the 30S ribosomal subunit. Interacts with proteins S7 and S18. Binds to IF-3.

Its function is as follows. Located on the platform of the 30S subunit, it bridges several disparate RNA helices of the 16S rRNA. Forms part of the Shine-Dalgarno cleft in the 70S ribosome. This is Small ribosomal subunit protein uS11 from Syntrophomonas wolfei subsp. wolfei (strain DSM 2245B / Goettingen).